The chain runs to 406 residues: Pyridinium-3,5-bisthiocarboxylic acid mononucleotide nickel insertion protein (406 aa).

It belongs to the LarC family.

It catalyses the reaction Ni(II)-pyridinium-3,5-bisthiocarboxylate mononucleotide = pyridinium-3,5-bisthiocarboxylate mononucleotide + Ni(2+). In terms of biological role, involved in the biosynthesis of a nickel-pincer cofactor ((SCS)Ni(II) pincer complex). Binds Ni(2+), and functions in nickel delivery to pyridinium-3,5-bisthiocarboxylic acid mononucleotide (P2TMN), to form the mature cofactor. Is thus probably required for the activation of nickel-pincer cofactor-dependent enzymes. This chain is Pyridinium-3,5-bisthiocarboxylic acid mononucleotide nickel insertion protein, found in Akkermansia muciniphila (strain ATCC BAA-835 / DSM 22959 / JCM 33894 / BCRC 81048 / CCUG 64013 / CIP 107961 / Muc).